Consider the following 106-residue polypeptide: Nucleoid-associated protein Noc_2594 (106 aa).

Disordered regions lie at residues 1 to 20 (MKGG…SNME) and 85 to 106 (QSKE…KLPL). Residues 10 to 20 (KQAQQLQSNME) show a composition bias toward polar residues.

The protein belongs to the YbaB/EbfC family. As to quaternary structure, homodimer.

It is found in the cytoplasm. The protein resides in the nucleoid. Functionally, binds to DNA and alters its conformation. May be involved in regulation of gene expression, nucleoid organization and DNA protection. In Nitrosococcus oceani (strain ATCC 19707 / BCRC 17464 / JCM 30415 / NCIMB 11848 / C-107), this protein is Nucleoid-associated protein Noc_2594.